Consider the following 741-residue polypeptide: G2 and S phase-expressed protein 1 (741 aa).

Ser-73 carries the phosphoserine modification. Disordered stretches follow at residues 101 to 120 (EVAQ…ETFV), 131 to 428 (EKEQ…KTVS), and 450 to 512 (FKVP…STRR). Residues 106–120 (ATPQNPVNQGKETFV) are compositionally biased toward polar residues. The segment covering 131–147 (EKEQKRDRSPMSLKRET) has biased composition (basic and acidic residues). 4 positions are modified to phosphoserine: Ser-139, Ser-153, Ser-191, and Ser-245. Positions 173–209 (SPVSAGPAQTQSNQGLPCSSQPLPRESSTSQPPSQAG) are enriched in polar residues. Positions 246 to 261 (IQRTKLVNEKGSQSDV) are enriched in polar residues. Residues 310-321 (SSTSGSASSLES) show a composition bias toward low complexity. Ser-311 carries the phosphoserine modification. A compositionally biased stretch (polar residues) spans 337 to 355 (QRSSIPASGSQRRTSTSKS). Residues 360–372 (PAASRQALPAAPA) are compositionally biased toward low complexity. Residues 398–408 (SPLTQQPQTPE) are compositionally biased toward polar residues. A Phosphoserine modification is found at Ser-460. A Phosphothreonine modification is found at Thr-465. 4 positions are modified to phosphoserine: Ser-476, Ser-493, Ser-509, and Ser-514. The span at 478–497 (TPASRVVSSTPVRRSSGTTP) shows a compositional bias: low complexity. Position 518 is a phosphothreonine (Thr-518). Ser-521, Ser-541, Ser-582, and Ser-599 each carry phosphoserine. The interval 550–640 (LSSEPRRRST…VHGGGCSHTP (91 aa)) is disordered. Over residues 578-593 (QGLSSDESSSPPSSVP) the composition is skewed to low complexity. Thr-696 bears the Phosphothreonine mark. 3 positions are modified to phosphoserine: Ser-720, Ser-726, and Ser-736.

In terms of processing, phosphorylated in mitosis.

It is found in the cytoplasm. The protein localises to the cytoskeleton. Its function is as follows. May be involved in p53-induced cell cycle arrest in G2/M phase by interfering with microtubule rearrangements that are required to enter mitosis. Overexpression delays G2/M phase progression. The chain is G2 and S phase-expressed protein 1 (Gtse1) from Mus musculus (Mouse).